The chain runs to 95 residues: LSM complex subunit LSM2 (95 aa).

Residues 2-76 (LFFSFFKTLV…VRYVYLNKNM (75 aa)) enclose the Sm domain.

The protein belongs to the snRNP Sm proteins family. As to quaternary structure, component of the heptameric LSM1-LSM7 complex that forms a seven-membered ring structure with a donut shape. The LSm subunits are arranged in the order LSM1, LSM2, LSM3, LSM6, LSM5, LSM7 and LSM4. Except for LSM1, where a C-terminal helix crosses the ring structure to form additional interactions with LSM3 and LSM6, each subunit interacts only with its two neighboring subunits. The LSM1-LSM7 complex interacts with PAT1; within the complex PAT1 has direct interactions with LSM2 and LSM3. The LSM1-LSM7 complex interacts with XRN1. Component of the heptameric LSM2-LSM8 complex that forms a seven-membered ring structure with a donut shape; an RNA strand can pass through the hole in the center of the ring structure. The LSm subunits are arranged in the order LSM8, LSM2, LSM3, LSM6, LSM5, LSM7 and LSM4. Interacts with U6 snRNA SNR6 and chaperone PRP24; to promote formation of the U4/U6-U5 tri-snRNP (small nuclear ribonucleoprotein) complex, the LSM2-LSM8 complex preferentially binds U6 snRNA that has been modified to contain a non-cyclic 3' phosphate. Component of the spliceosome U4/U6-U5 tri-snRNP complex composed of the U4, U6 and U5 snRNAs and at least PRP3, PRP4, PRP6, PRP8, PRP18, PRP31, PRP38, SNU13, SNU23, SNU66, SNU114, SPP381, SMB1, SMD1, SMD2, SMD3, SMX2, SMX3, LSM2, LSM3, LSM4, LSM5, LSM6, LSM7, LSM8, BRR2 and DIB1. May be found in a complex comprising LSM2-LSM7 without LSM1 or LSM8; the complex associates with pre-P RNA and snoRNA SNR5.

The protein localises to the nucleus. The protein resides in the nucleolus. Its subcellular location is the cytoplasm. Functionally, component of LSm protein complexes, which are involved in RNA processing and may function in a chaperone-like manner. Component of the cytoplasmic LSM1-LSM7 complex which is involved in mRNA degradation by activating the decapping step. Together with PAT1, the LSM1-LSM7 complex binds to osmotic stress-activated mRNAs to attenuate the osmotic stress response, probably by limiting ribosome access to the mRNA and consequently translation. Component of the nuclear LSM2-LSM8 complex, which is involved in spliceosome assembly. The LSM2-LSM8 complex plays a role in the biogenesis of the spliceosomal U4/U6-U5 tri-snRNP complex by accelerating PRP24-mediated annealing of U4/U6 di-snRNA. The LSM2-LSM8 complex binds U6 snRNA terminating with a non-cyclic 3' phosphate group. LSM2-LSM8 is probably also involved in degradation of nuclear pre-mRNA by targeting them for decapping. LSM2-LSM8 could be involved in processing of pre-tRNAs, pre-rRNAs and U3 snoRNA, although involvement may be indirect. In a complex that probably contains LSM2-LSM7, but not LSM1 or LSM8, associates with the precursor of the RNA component of RNase P (pre-P RNA) and may be involved in maturing pre-P RNA; the complex also associates with snoRNA SNR5. The chain is LSM complex subunit LSM2 (LSM2) from Saccharomyces cerevisiae (strain ATCC 204508 / S288c) (Baker's yeast).